The chain runs to 556 residues: CDP-diacylglycerol--glycerol-3-phosphate 3-phosphatidyltransferase, mitochondrial (556 aa).

Residues methionine 1–alanine 28 constitute a mitochondrion transit peptide. Serine 49 carries the phosphoserine modification. Alanine 124 to glycine 131 is an ATP binding site. 2 PLD phosphodiesterase domains span residues threonine 215–tyrosine 241 and arginine 460–serine 493. Catalysis depends on residues histidine 220, lysine 222, and aspartate 227.

The protein belongs to the CDP-alcohol phosphatidyltransferase class-II family.

It is found in the mitochondrion. The catalysed reaction is a CDP-1,2-diacyl-sn-glycerol + sn-glycerol 3-phosphate = a 1,2-diacyl-sn-glycero-3-phospho-(1'-sn-glycero-3'-phosphate) + CMP + H(+). Its pathway is phospholipid metabolism; phosphatidylglycerol biosynthesis; phosphatidylglycerol from CDP-diacylglycerol: step 1/2. Activated by calcium and magnesium and inhibited by other bivalent cations. Functions in the biosynthesis of the anionic phospholipids phosphatidylglycerol and cardiolipin. This chain is CDP-diacylglycerol--glycerol-3-phosphate 3-phosphatidyltransferase, mitochondrial (PGS1), found in Pongo abelii (Sumatran orangutan).